Consider the following 81-residue polypeptide: Photosystem I iron-sulfur center (81 aa).

4Fe-4S ferredoxin-type domains are found at residues Ala2–Trp31 and Ile39–Tyr68. Positions 11, 14, 17, 21, 48, 51, 54, and 58 each coordinate [4Fe-4S] cluster.

The eukaryotic PSI reaction center is composed of at least 11 subunits. [4Fe-4S] cluster is required as a cofactor.

The protein resides in the plastid. The protein localises to the chloroplast thylakoid membrane. It carries out the reaction reduced [plastocyanin] + hnu + oxidized [2Fe-2S]-[ferredoxin] = oxidized [plastocyanin] + reduced [2Fe-2S]-[ferredoxin]. Its function is as follows. Apoprotein for the two 4Fe-4S centers FA and FB of photosystem I (PSI); essential for photochemical activity. FB is the terminal electron acceptor of PSI, donating electrons to ferredoxin. The C-terminus interacts with PsaA/B/D and helps assemble the protein into the PSI complex. Required for binding of PsaD and PsaE to PSI. PSI is a plastocyanin-ferredoxin oxidoreductase, converting photonic excitation into a charge separation, which transfers an electron from the donor P700 chlorophyll pair to the spectroscopically characterized acceptors A0, A1, FX, FA and FB in turn. The polypeptide is Photosystem I iron-sulfur center (psaC) (Anthoceros angustus (Hornwort)).